Consider the following 906-residue polypeptide: Protein translocase subunit SecA (906 aa).

Residues glutamine 87, 105 to 109 (GEGKT), and aspartate 507 contribute to the ATP site. Basic and acidic residues predominate over residues 553–563 (RHESRRIDNQL). Disordered regions lie at residues 553–576 (RHES…PGSS) and 854–906 (LEEP…GRLA). The Zn(2+) site is built by cysteine 890, cysteine 892, cysteine 901, and histidine 902. The segment covering 896 to 906 (KKYKQCHGRLA) has biased composition (basic residues).

The protein belongs to the SecA family. In terms of assembly, monomer and homodimer. Part of the essential Sec protein translocation apparatus which comprises SecA, SecYEG and auxiliary proteins SecDF-YajC and YidC. The cofactor is Zn(2+).

It is found in the cell inner membrane. The protein resides in the cytoplasm. It catalyses the reaction ATP + H2O + cellular proteinSide 1 = ADP + phosphate + cellular proteinSide 2.. Functionally, part of the Sec protein translocase complex. Interacts with the SecYEG preprotein conducting channel. Has a central role in coupling the hydrolysis of ATP to the transfer of proteins into and across the cell membrane, serving both as a receptor for the preprotein-SecB complex and as an ATP-driven molecular motor driving the stepwise translocation of polypeptide chains across the membrane. The polypeptide is Protein translocase subunit SecA (Methylococcus capsulatus (strain ATCC 33009 / NCIMB 11132 / Bath)).